A 318-amino-acid chain; its full sequence is Ubiquinol oxidase, mitochondrial (318 aa).

The N-terminal 46 residues, 1-46 (MTVMRGLLNGGRYGNRYIWTAISLRHPEVMEGNGLESAVMQWRRML), are a transit peptide targeting the mitochondrion. The chain crosses the membrane as a helical span at residues 143-163 (AMMLETVAAVPGMVGGMLLHL). Fe cation contacts are provided by Glu147, Glu186, and His189. The chain crosses the membrane as a helical span at residues 205–225 (LLVLAVQGVFFNSFFVLYVLS). Fe cation is bound by residues Glu237, Glu288, and His291.

The protein belongs to the alternative oxidase family. Homodimer; disulfide-linked. Fe cation serves as cofactor.

The protein resides in the mitochondrion inner membrane. It carries out the reaction 2 a ubiquinol + O2 = 2 a ubiquinone + 2 H2O. Functionally, catalyzes the cyanide-resistant oxidation of ubiquinol and the reduction of molecular oxygen to water, but does not translocate protons and consequently is not linked to oxidative phosphorylation. May increase respiration when the cytochrome respiratory pathway is restricted, or in response to low temperatures. The protein is Ubiquinol oxidase, mitochondrial (AOMI 1) of Mangifera indica (Mango).